Reading from the N-terminus, the 456-residue chain is Retrovirus-related Env polyprotein from copia-like transposable element 17.6 (456 aa).

N-linked (GlcNAc...) asparagine glycans are attached at residues N44, N151, N228, N310, N368, and N388.

The polypeptide is Retrovirus-related Env polyprotein from copia-like transposable element 17.6 (env) (Drosophila melanogaster (Fruit fly)).